A 628-amino-acid chain; its full sequence is Beta-lactamase-like protein 1 (628 aa).

Positions 1 to 28 (MKNILSFSFSFSFLYILFLLLFLNNNLL) are cleaved as a signal peptide. Residues Asn-45, Asn-68, Asn-198, and Asn-241 are each glycosylated (N-linked (GlcNAc...) asparagine). The segment covering 245 to 281 (NNNNNNNNNNNNNNNNNNNNNNNNNNNNNNNNNNNNN) has biased composition (low complexity). The interval 245–285 (NNNNNNNNNNNNNNNNNNNNNNNNNNNNNNNNNNNNNKIKT) is disordered. Asn-313 and Asn-335 each carry an N-linked (GlcNAc...) asparagine glycan. The interval 494–516 (EKEEKEEEEENQQDESQQQQQQQ) is disordered. Over residues 496–506 (EEKEEEEENQQ) the composition is skewed to acidic residues. Low complexity predominate over residues 507–516 (DESQQQQQQQ).

It belongs to the beta-lactamase family.

The protein localises to the secreted. This Dictyostelium discoideum (Social amoeba) protein is Beta-lactamase-like protein 1.